The chain runs to 257 residues: Hydroxyacylglutathione hydrolase (257 aa).

Zn(2+) contacts are provided by His53, His55, Asp57, His58, His109, Asp126, and His164.

This sequence belongs to the metallo-beta-lactamase superfamily. Glyoxalase II family. As to quaternary structure, monomer. The cofactor is Zn(2+).

The enzyme catalyses an S-(2-hydroxyacyl)glutathione + H2O = a 2-hydroxy carboxylate + glutathione + H(+). It functions in the pathway secondary metabolite metabolism; methylglyoxal degradation; (R)-lactate from methylglyoxal: step 2/2. Functionally, thiolesterase that catalyzes the hydrolysis of S-D-lactoyl-glutathione to form glutathione and D-lactic acid. In Baumannia cicadellinicola subsp. Homalodisca coagulata, this protein is Hydroxyacylglutathione hydrolase.